A 649-amino-acid polypeptide reads, in one-letter code: Macrolide export ATP-binding/permease protein MacB (649 aa).

Positions 7 to 245 constitute an ABC transporter domain; that stretch reads IELKNIVRRY…SSAQEVTPQL (239 aa). 43 to 50 lines the ATP pocket; it reads GASGSGKS. 4 helical membrane passes run 276–296, 529–549, 582–602, and 612–632; these read LLTM…IALG, IAFI…LVSV, LLGG…FSAF, and FSSF…FGYF.

This sequence belongs to the ABC transporter superfamily. Macrolide exporter (TC 3.A.1.122) family. Homodimer. Part of the tripartite efflux system MacAB-TolC, which is composed of an inner membrane transporter, MacB, a periplasmic membrane fusion protein, MacA, and an outer membrane component, TolC. The complex forms a large protein conduit and can translocate molecules across both the inner and outer membranes. Interacts with MacA.

The protein localises to the cell inner membrane. Its function is as follows. Part of the tripartite efflux system MacAB-TolC. MacB is a non-canonical ABC transporter that contains transmembrane domains (TMD), which form a pore in the inner membrane, and an ATP-binding domain (NBD), which is responsible for energy generation. Confers resistance against macrolides. This Pasteurella multocida (strain Pm70) protein is Macrolide export ATP-binding/permease protein MacB.